The primary structure comprises 525 residues: ATP synthase subunit beta, mitochondrial (525 aa).

The transit peptide at 1–44 (MLKKQALSGIRRFSLATKQSFVKTSYKLPRKSWLNTAKFNTIRY) directs the protein to the mitochondrion. Residue 203 to 210 (GGAGVGKT) coordinates ATP.

The protein belongs to the ATPase alpha/beta chains family. F-type ATPases have 2 components, CF(1) - the catalytic core - and CF(0) - the membrane proton channel. CF(1) has five subunits: alpha(3), beta(3), gamma(1), delta(1), epsilon(1). CF(0) has three main subunits: a, b and c.

It is found in the mitochondrion. It localises to the mitochondrion inner membrane. It catalyses the reaction ATP + H2O + 4 H(+)(in) = ADP + phosphate + 5 H(+)(out). Functionally, mitochondrial membrane ATP synthase (F(1)F(0) ATP synthase or Complex V) produces ATP from ADP in the presence of a proton gradient across the membrane which is generated by electron transport complexes of the respiratory chain. F-type ATPases consist of two structural domains, F(1) - containing the extramembraneous catalytic core, and F(0) - containing the membrane proton channel, linked together by a central stalk and a peripheral stalk. During catalysis, ATP synthesis in the catalytic domain of F(1) is coupled via a rotary mechanism of the central stalk subunits to proton translocation. Subunits alpha and beta form the catalytic core in F(1). Rotation of the central stalk against the surrounding alpha(3)beta(3) subunits leads to hydrolysis of ATP in three separate catalytic sites on the beta subunits. The chain is ATP synthase subunit beta, mitochondrial (atp2) from Schizosaccharomyces pombe (strain 972 / ATCC 24843) (Fission yeast).